The following is a 110-amino-acid chain: Large ribosomal subunit protein uL22 (110 aa).

Belongs to the universal ribosomal protein uL22 family. Part of the 50S ribosomal subunit.

This protein binds specifically to 23S rRNA; its binding is stimulated by other ribosomal proteins, e.g. L4, L17, and L20. It is important during the early stages of 50S assembly. It makes multiple contacts with different domains of the 23S rRNA in the assembled 50S subunit and ribosome. Its function is as follows. The globular domain of the protein is located near the polypeptide exit tunnel on the outside of the subunit, while an extended beta-hairpin is found that lines the wall of the exit tunnel in the center of the 70S ribosome. This Haemophilus ducreyi (strain 35000HP / ATCC 700724) protein is Large ribosomal subunit protein uL22.